A 582-amino-acid polypeptide reads, in one-letter code: MLPDIEICRATPLAPIDTIAQKAGLHANEYESHGQHKAKVSLHCLERLANKPKGKFILVTAITPTPLGEGKTVTTIGLAQGLAKLNHSVMACIRQPSMGPIFGVKGGAAGGGYSQVAPMEELNLHLTGDIHAVTAAHNLAAAAIDARIYHEQRLGYADFERRTGMPALRIDPKQVIWKRVMDHNDRALRMVTVGRNEPGKNINGYEREDGFDISAASELMAILALASDLRDLRRRIGNVVLAYDLDGNPVTTEDLKVAGAMAVSMKEAIEPTLMQTLEGVPTLIHAGPFANIAHGNSSIIADEIATRLADYTVTEGGFGSDMGFEKACNIKAKASGKTPDCAVIVATLRGLKANSGLYDLRPGQAVPDALFAPDSAALQAGFANLKWHIDNVNQYGVPAVVAINRFPQDCAEELEQLVKLIEALPNRVSVAISEGFAKGGEGTKLLAEKVVEQCQHPTKFTPLYDSGIPLDEKLKAVAVKGYGAAEIALSDKAAQQLAKLQTQGFDHLAVCLAKTPLSISTDPAIKGAPRDFIVPIRELRLCAGAEFVYALCGSVMTMPGLPEKPSFMALDIDQHGNIVGLS.

65 to 72 contributes to the ATP binding site; sequence TPLGEGKT.

It belongs to the formate--tetrahydrofolate ligase family.

The enzyme catalyses (6S)-5,6,7,8-tetrahydrofolate + formate + ATP = (6R)-10-formyltetrahydrofolate + ADP + phosphate. The protein operates within one-carbon metabolism; tetrahydrofolate interconversion. This is Formate--tetrahydrofolate ligase from Vibrio cholerae serotype O1 (strain ATCC 39315 / El Tor Inaba N16961).